A 306-amino-acid polypeptide reads, in one-letter code: MNFPDLIPDLKPAMPELRGRLLANAPLAPLTWFRVGGPAQLLFTPADENDLAYFLARLPKEIPVSIVGVGSNLIVRDGGLPGAVIRLAARGFGETRVDGDVIHAGAAALDKRVAETAAAAGIGGLEFLYGIPGTIGGALRMNAGANGGEIKDVLEEATGIGRDGSLHVFRNAGMRLSYRKSGVDASVIFTSVRLRGAIAPPETIRAKMDEVQKHRETAQPIREKTGGSTFKNPPGQSAWKLIDEAGCRGLRVGGAQVSELHCNFLINTGDATAADIETLGETVRDRVKTHSGIELQWEIKRIGIAA.

An FAD-binding PCMH-type domain is found at 34-199 (RVGGPAQLLF…TSVRLRGAIA (166 aa)). Residue R179 is part of the active site. S228 acts as the Proton donor in catalysis. E298 is a catalytic residue.

It belongs to the MurB family. FAD is required as a cofactor.

The protein localises to the cytoplasm. The catalysed reaction is UDP-N-acetyl-alpha-D-muramate + NADP(+) = UDP-N-acetyl-3-O-(1-carboxyvinyl)-alpha-D-glucosamine + NADPH + H(+). It functions in the pathway cell wall biogenesis; peptidoglycan biosynthesis. Its function is as follows. Cell wall formation. This Rhodopseudomonas palustris (strain BisA53) protein is UDP-N-acetylenolpyruvoylglucosamine reductase.